A 729-amino-acid polypeptide reads, in one-letter code: FYN-binding protein 2 (729 aa).

Disordered regions lie at residues 18 to 130, 170 to 320, 371 to 408, and 469 to 490; these read KFNA…EEKG, EGQK…SAEL, ELSP…PPKV, and VTKE…KTYD. Polar residues-rich tracts occupy residues 69 to 81, 89 to 99, 190 to 216, and 226 to 240; these read GVSQ…TLKS, KTSSSSGTPEK, GAQT…SSVS, and KSPA…SQCQ. The segment covering 275–284 has biased composition (pro residues); that stretch reads GPPPPKPSKP. Basic and acidic residues predominate over residues 374–402; it reads PRPKEEENTMEEKESWESEPLEPRKELHP. Residues 473-485 are compositionally biased toward low complexity; sequence TPSPSTIRSSSSS. At Tyr489 the chain carries Phosphotyrosine. Positions 520 to 523 match the SH2-binding; to LCP2 motif; that stretch reads YEDI. A disordered region spans residues 576-603; the sequence is DLGPRSQDDSQDGIIYDDVDTREKESND. Residues 584–593 show a composition bias toward acidic residues; that stretch reads DSQDGIIYDD. Tyr591 bears the Phosphotyrosine mark. Residues 594–603 are compositionally biased toward basic and acidic residues; sequence VDTREKESND. In terms of domain architecture, SH3 spans 668-728; that stretch reads LVINRAVACA…LVEHLDFKHQ (61 aa).

As to quaternary structure, interacts with SKAP1, LCK and FYN. The phosphorylated form interacts with LCP2. Phosphorylation is required for its function in T-cell activation.

It localises to the membrane raft. Adapter protein that plays a role in T-cell receptor (TCR)-mediated activation of signaling pathways. Required for T-cell activation and integrin-mediated T-cell adhesion in response to TCR stimulation. This is FYN-binding protein 2 from Mus musculus (Mouse).